The following is a 156-amino-acid chain: Ecotin (156 aa).

The N-terminal stretch at methionine 1–alanine 19 is a signal peptide. Residues cysteine 65 and cysteine 102 are joined by a disulfide bond.

Belongs to the protease inhibitor I11 (ecotin) family. Homodimer.

It is found in the periplasm. Its function is as follows. General inhibitor of family S1 serine proteases. The polypeptide is Ecotin (Pseudomonas aeruginosa (strain UCBPP-PA14)).